Consider the following 142-residue polypeptide: UPF0102 protein Bamb_0202 (142 aa).

The tract at residues 1–23 (MCHAAPAAPASGRGLPHGGGNFS) is disordered.

Belongs to the UPF0102 family.

This chain is UPF0102 protein Bamb_0202, found in Burkholderia ambifaria (strain ATCC BAA-244 / DSM 16087 / CCUG 44356 / LMG 19182 / AMMD) (Burkholderia cepacia (strain AMMD)).